Here is a 203-residue protein sequence, read N- to C-terminus: Holliday junction branch migration complex subunit RuvA (203 aa).

The domain I stretch occupies residues 1-63 (MIGKLSGKID…EEHIHLYGFL (63 aa)). Residues 64–142 (TLEEKNFFNL…KISSGSVIIK (79 aa)) are domain II. Residues 143–149 (DSLNIKN) form a flexible linker region. Positions 150–203 (ITPVASNEVIKALVNLGFSRFEAQNAVQGIIIQNPEISIDELIKTALKNRNAGL) are domain III.

Belongs to the RuvA family. As to quaternary structure, homotetramer. Forms an RuvA(8)-RuvB(12)-Holliday junction (HJ) complex. HJ DNA is sandwiched between 2 RuvA tetramers; dsDNA enters through RuvA and exits via RuvB. An RuvB hexamer assembles on each DNA strand where it exits the tetramer. Each RuvB hexamer is contacted by two RuvA subunits (via domain III) on 2 adjacent RuvB subunits; this complex drives branch migration. In the full resolvosome a probable DNA-RuvA(4)-RuvB(12)-RuvC(2) complex forms which resolves the HJ.

The protein resides in the cytoplasm. The RuvA-RuvB-RuvC complex processes Holliday junction (HJ) DNA during genetic recombination and DNA repair, while the RuvA-RuvB complex plays an important role in the rescue of blocked DNA replication forks via replication fork reversal (RFR). RuvA specifically binds to HJ cruciform DNA, conferring on it an open structure. The RuvB hexamer acts as an ATP-dependent pump, pulling dsDNA into and through the RuvAB complex. HJ branch migration allows RuvC to scan DNA until it finds its consensus sequence, where it cleaves and resolves the cruciform DNA. The sequence is that of Holliday junction branch migration complex subunit RuvA from Rickettsia felis (strain ATCC VR-1525 / URRWXCal2) (Rickettsia azadi).